A 203-amino-acid polypeptide reads, in one-letter code: Small ribosomal subunit protein uS3 (203 aa).

The protein belongs to the universal ribosomal protein uS3 family. In terms of assembly, part of the 30S ribosomal subunit. Forms a tight complex with proteins S10 and S14.

Functionally, binds the lower part of the 30S subunit head. Binds mRNA in the 70S ribosome, positioning it for translation. The protein is Small ribosomal subunit protein uS3 of Carsonella ruddii (strain PV).